The chain runs to 134 residues: GSH-induced LITAF domain protein (134 aa).

Positions 33–113 constitute an LITAF domain; it reads DPLGAPIQQT…CGNKVADFEK (81 aa). Zn(2+)-binding residues include Cys53 and Cys56. Residues 68–88 form a membrane-binding amphipathic helix region; sequence PGVAAVVACMMPFMLGFCFLC. Cys101 and Cys104 together coordinate Zn(2+).

Belongs to the CDIP1/LITAF family. In terms of assembly, interacts (via N- and C-terminal) with MIEL1 and LSD1 (via N-terminus).

It localises to the cell membrane. Its function is as follows. Acts as a membrane anchor, bringing other regulators of programmed cell death (PCD) to the plasma membrane. Negatively regulates hypersensitive cell death. The chain is GSH-induced LITAF domain protein from Arabidopsis thaliana (Mouse-ear cress).